A 310-amino-acid polypeptide reads, in one-letter code: Proline iminopeptidase (310 aa).

The region spanning 33 to 290 (PVIFLHGGPG…RVVQAGHRAF (258 aa)) is the AB hydrolase-1 domain. Ser-107 serves as the catalytic Nucleophile. The active site involves Asp-260. The Proton donor role is filled by His-287.

The protein belongs to the peptidase S33 family.

Its subcellular location is the cytoplasm. The enzyme catalyses Release of N-terminal proline from a peptide.. Its function is as follows. Specifically catalyzes the removal of N-terminal proline residues from peptides. In Neisseria meningitidis serogroup A / serotype 4A (strain DSM 15465 / Z2491), this protein is Proline iminopeptidase (pip).